The chain runs to 320 residues: Cytochrome f (320 aa).

The signal sequence occupies residues 1–35 (MQTRNTFSWIKEQITRSISASLMIYIITRTSISNA). Residues tyrosine 36, cysteine 56, cysteine 59, and histidine 60 each contribute to the heme site. The chain crosses the membrane as a helical span at residues 286-306 (VQGLLFFFAAVILAQIFLVLK).

Belongs to the cytochrome f family. The 4 large subunits of the cytochrome b6-f complex are cytochrome b6, subunit IV (17 kDa polypeptide, petD), cytochrome f and the Rieske protein, while the 4 small subunits are PetG, PetL, PetM and PetN. The complex functions as a dimer. The cofactor is heme.

The protein resides in the plastid. The protein localises to the chloroplast thylakoid membrane. Component of the cytochrome b6-f complex, which mediates electron transfer between photosystem II (PSII) and photosystem I (PSI), cyclic electron flow around PSI, and state transitions. This Helianthus annuus (Common sunflower) protein is Cytochrome f.